The primary structure comprises 344 residues: N-acetyl-gamma-glutamyl-phosphate reductase (344 aa).

The active site involves Cys148.

The protein belongs to the NAGSA dehydrogenase family. Type 1 subfamily.

It is found in the cytoplasm. The catalysed reaction is N-acetyl-L-glutamate 5-semialdehyde + phosphate + NADP(+) = N-acetyl-L-glutamyl 5-phosphate + NADPH + H(+). It functions in the pathway amino-acid biosynthesis; L-arginine biosynthesis; N(2)-acetyl-L-ornithine from L-glutamate: step 3/4. Functionally, catalyzes the NADPH-dependent reduction of N-acetyl-5-glutamyl phosphate to yield N-acetyl-L-glutamate 5-semialdehyde. In Clostridium botulinum (strain Alaska E43 / Type E3), this protein is N-acetyl-gamma-glutamyl-phosphate reductase.